The sequence spans 33 residues: Imperacalcin (33 aa).

Cystine bridges form between cysteine 3–cysteine 17, cysteine 10–cysteine 21, and cysteine 16–cysteine 32. Important for stimulation of [3H]ryanodine binding to RYR1 stretches follow at residues 8 to 9 and 19 to 20; these read KR and KK. Residues 22–24 are essential for stimulation of [3H]ryanodine binding to RYR1; the sequence is KRR. The interval 25–27 is important for stimulation of [3H]ryanodine binding to RYR1; that stretch reads GTN.

This sequence belongs to the scorpion calcin family. In terms of tissue distribution, expressed by the venom gland.

The protein resides in the secreted. Functionally, this toxin affects the activity of ryanodine receptors 1, 2 and 3 (RyR1, RyR2 and RyR3). At lower concentrations the toxin increases full openings of the RyRs, and at higher concentrations it inhibits full openings and induces openings to subconductance levels (30% of the full conductance state) and reduces the number of full conductance openings. The different actions may be attributed to the toxins binding at different sites on the RyRs, with binding at a high-affinity site mediating the increase in full openings and the induction of subconductance states evoked upon binding to a lower-affinity site. Furthermore, it triggers calcium release from sarcoplasmic vesicles (11.7 nM are enough to induce a sharp release, and 70% of the total calcium is released after toxin (100 nM) addition) probably by acting as a cell-penetrating peptide (CPP). In addition, it has been shown to dose-dependently stimulate ryanodine binding to RyR1 (EC(50)=8.7 nM). It also augments the bell-shaped calcium-[3H]ryanodine binding curve that is maximal at about 10 uM calcium concentration. It binds a different site as ryanodine. It acts synergistically with caffeine. In vivo, intracerebroventricular injection into mice induces neurotoxic symptoms, followed by death. The chain is Imperacalcin from Pandinus imperator (Emperor scorpion).